Consider the following 40-residue polypeptide: Photosystem II reaction center protein J (40 aa).

A helical membrane pass occupies residues 8-28 (IPLWIIGTVTGILVIGLIGIF).

Belongs to the PsbJ family. PSII is composed of 1 copy each of membrane proteins PsbA, PsbB, PsbC, PsbD, PsbE, PsbF, PsbH, PsbI, PsbJ, PsbK, PsbL, PsbM, PsbT, PsbX, PsbY, PsbZ, Psb30/Ycf12, at least 3 peripheral proteins of the oxygen-evolving complex and a large number of cofactors. It forms dimeric complexes.

It is found in the plastid. It localises to the chloroplast thylakoid membrane. Functionally, one of the components of the core complex of photosystem II (PSII). PSII is a light-driven water:plastoquinone oxidoreductase that uses light energy to abstract electrons from H(2)O, generating O(2) and a proton gradient subsequently used for ATP formation. It consists of a core antenna complex that captures photons, and an electron transfer chain that converts photonic excitation into a charge separation. This Eucalyptus globulus subsp. globulus (Tasmanian blue gum) protein is Photosystem II reaction center protein J.